A 218-amino-acid polypeptide reads, in one-letter code: MGQKINPLGFRLGTTQSHHSLWFTQPKNYSEGLQEDQKIRDFIKNYVQKNLKISSGVEGIARIEIHKRIDLIQVIIYMGFPKLLIENRPGGIEKLQMNLQKEFNCVNRKLNITITRIAKPYGSPNILAEFIAGQLKNRVSFRKAMKKAIELTEQADTKGIQVQISGRIDGKEIARVEWIREGRVPLQTIRAKIDYCSYTVRTIYGVLGIKIWIFLDGE.

Positions valine 47–alanine 118 constitute a KH type-2 domain.

It belongs to the universal ribosomal protein uS3 family. As to quaternary structure, part of the 30S ribosomal subunit.

The protein resides in the plastid. Its subcellular location is the chloroplast. The sequence is that of Small ribosomal subunit protein uS3c (rps3) from Daucus carota (Wild carrot).